Consider the following 535-residue polypeptide: Methylmalonate-semialdehyde/malonate-semialdehyde dehydrogenase [acylating], mitochondrial (535 aa).

The transit peptide at 1-33 (MAALLAAAAVRARILQVSSKVKSSPTWYSASSF) directs the protein to the mitochondrion. Lys47, Lys52, Lys55, and Lys76 each carry N6-acetyllysine; alternate. Residues Lys47, Lys52, Lys55, and Lys76 each carry the N6-succinyllysine; alternate modification. Lys87 is subject to N6-acetyllysine. N6-acetyllysine; alternate is present on residues Lys117 and Lys129. N6-succinyllysine; alternate occurs at positions 117 and 129. Positions 183, 185, 209, 212, 213, and 262 each coordinate NAD(+). Ser262 bears the Phosphoserine mark. Lys298 is modified (N6-acetyllysine). Cys317 serves as the catalytic Nucleophile. An N6-acetyllysine mark is found at Lys330 and Lys331. N6-acetyllysine; alternate is present on residues Lys364 and Lys376. Lys364 and Lys376 each carry N6-succinyllysine; alternate. The residue at position 380 (Ser380) is a Phosphoserine. At Lys391 the chain carries N6-succinyllysine. Glu417 contacts NAD(+). Lys500 bears the N6-acetyllysine mark. Lys517 is modified (N6-succinyllysine).

It belongs to the aldehyde dehydrogenase family. In terms of assembly, homotetramer.

The protein resides in the mitochondrion. It carries out the reaction 3-oxopropanoate + NAD(+) + CoA + H2O = hydrogencarbonate + acetyl-CoA + NADH + H(+). The catalysed reaction is 2-methyl-3-oxopropanoate + NAD(+) + CoA + H2O = propanoyl-CoA + hydrogencarbonate + NADH + H(+). The enzyme catalyses (R)-2-methyl-3-oxopropanoate + NAD(+) + CoA + H2O = propanoyl-CoA + hydrogencarbonate + NADH + H(+). It catalyses the reaction (S)-2-methyl-3-oxopropanoate + NAD(+) + CoA + H2O = propanoyl-CoA + hydrogencarbonate + NADH + H(+). In terms of biological role, malonate and methylmalonate semialdehyde dehydrogenase involved in the catabolism of valine, thymine, and compounds catabolized by way of beta-alanine, including uracil and cytidine. In Homo sapiens (Human), this protein is Methylmalonate-semialdehyde/malonate-semialdehyde dehydrogenase [acylating], mitochondrial.